Reading from the N-terminus, the 407-residue chain is Probable tRNA sulfurtransferase (407 aa).

Residues 61 to 165 enclose the THUMP domain; that stretch reads EEMCNRLKKV…LDAIYMYDQV (105 aa). Residues 183–184, 208–209, Arg-265, Gly-287, and Gln-296 contribute to the ATP site; these read ML and HF.

It belongs to the ThiI family.

The protein resides in the cytoplasm. It carries out the reaction [ThiI sulfur-carrier protein]-S-sulfanyl-L-cysteine + a uridine in tRNA + 2 reduced [2Fe-2S]-[ferredoxin] + ATP + H(+) = [ThiI sulfur-carrier protein]-L-cysteine + a 4-thiouridine in tRNA + 2 oxidized [2Fe-2S]-[ferredoxin] + AMP + diphosphate. The catalysed reaction is [ThiS sulfur-carrier protein]-C-terminal Gly-Gly-AMP + S-sulfanyl-L-cysteinyl-[cysteine desulfurase] + AH2 = [ThiS sulfur-carrier protein]-C-terminal-Gly-aminoethanethioate + L-cysteinyl-[cysteine desulfurase] + A + AMP + 2 H(+). Its pathway is cofactor biosynthesis; thiamine diphosphate biosynthesis. Catalyzes the ATP-dependent transfer of a sulfur to tRNA to produce 4-thiouridine in position 8 of tRNAs, which functions as a near-UV photosensor. Also catalyzes the transfer of sulfur to the sulfur carrier protein ThiS, forming ThiS-thiocarboxylate. This is a step in the synthesis of thiazole, in the thiamine biosynthesis pathway. The sulfur is donated as persulfide by IscS. This Staphylococcus saprophyticus subsp. saprophyticus (strain ATCC 15305 / DSM 20229 / NCIMB 8711 / NCTC 7292 / S-41) protein is Probable tRNA sulfurtransferase.